The sequence spans 714 residues: Glycine--tRNA ligase beta subunit (714 aa).

The protein belongs to the class-II aminoacyl-tRNA synthetase family. Tetramer of two alpha and two beta subunits.

It is found in the cytoplasm. The catalysed reaction is tRNA(Gly) + glycine + ATP = glycyl-tRNA(Gly) + AMP + diphosphate. In Rhodospirillum centenum (strain ATCC 51521 / SW), this protein is Glycine--tRNA ligase beta subunit.